A 284-amino-acid chain; its full sequence is Polyamine aminopropyltransferase (284 aa).

Positions 2-237 (ELWYTEKHTE…GHWLFGFASK (236 aa)) constitute a PABS domain. Glutamine 31 contributes to the S-methyl-5'-thioadenosine binding site. Histidine 62 and aspartate 86 together coordinate spermidine. Residues glutamate 106 and 137–138 (DG) each bind S-methyl-5'-thioadenosine. The active-site Proton acceptor is aspartate 155. Spermidine is bound at residue 155–158 (DSTD). Proline 162 provides a ligand contact to S-methyl-5'-thioadenosine.

This sequence belongs to the spermidine/spermine synthase family. Homodimer or homotetramer.

The protein localises to the cytoplasm. It catalyses the reaction S-adenosyl 3-(methylsulfanyl)propylamine + putrescine = S-methyl-5'-thioadenosine + spermidine + H(+). It participates in amine and polyamine biosynthesis; spermidine biosynthesis; spermidine from putrescine: step 1/1. In terms of biological role, catalyzes the irreversible transfer of a propylamine group from the amino donor S-adenosylmethioninamine (decarboxy-AdoMet) to putrescine (1,4-diaminobutane) to yield spermidine. This Clostridium botulinum (strain Eklund 17B / Type B) protein is Polyamine aminopropyltransferase.